The chain runs to 217 residues: Probable GTP-binding protein EngB (217 aa).

The EngB-type G domain maps to 37 to 214 (DGVEIAFAGR…RAAMAKLLEE (178 aa)). Residues 45–52 (GRSNVGKS), 72–76 (GRTQE), 92–95 (DMPG), 159–162 (TKAD), and 193–195 (TSS) each bind GTP. Serine 52 and threonine 74 together coordinate Mg(2+).

The protein belongs to the TRAFAC class TrmE-Era-EngA-EngB-Septin-like GTPase superfamily. EngB GTPase family. Mg(2+) is required as a cofactor.

Its function is as follows. Necessary for normal cell division and for the maintenance of normal septation. The polypeptide is Probable GTP-binding protein EngB (Bradyrhizobium diazoefficiens (strain JCM 10833 / BCRC 13528 / IAM 13628 / NBRC 14792 / USDA 110)).